We begin with the raw amino-acid sequence, 263 residues long: Ribonuclease HII (263 aa).

The RNase H type-2 domain occupies 71–262 (QAIAGIDEVG…VKSMCCDSTN (192 aa)). A divalent metal cation is bound by residues D77, E78, and D172.

The protein belongs to the RNase HII family. Mn(2+) is required as a cofactor. Mg(2+) serves as cofactor.

It localises to the cytoplasm. It carries out the reaction Endonucleolytic cleavage to 5'-phosphomonoester.. Endonuclease that specifically degrades the RNA of RNA-DNA hybrids. This is Ribonuclease HII from Streptococcus pyogenes serotype M12 (strain MGAS2096).